The sequence spans 62 residues: Large ribosomal subunit protein uL30 (62 aa).

The protein belongs to the universal ribosomal protein uL30 family. As to quaternary structure, part of the 50S ribosomal subunit.

This is Large ribosomal subunit protein uL30 from Roseobacter denitrificans (strain ATCC 33942 / OCh 114) (Erythrobacter sp. (strain OCh 114)).